The chain runs to 821 residues: Protein EFR3 homolog A (821 aa).

A phosphoserine mark is found at S360, S363, S422, and S694.

The protein belongs to the EFR3 family. In terms of assembly, component of a phosphatidylinositol 4-kinase (PI4K) complex, composed of PI4KA, EFR3 (EFR3A or EFR3B), TTC7 (TTC7A or TTC7B) and HYCC (HYCC1 or HYCC2). Post-translationally, palmitoylated at its N-terminus, anchoring the protein to the plasma membrane.

It localises to the cell membrane. It is found in the cytoplasm. Its subcellular location is the cytosol. Functionally, component of a complex required to localize phosphatidylinositol 4-kinase (PI4K) to the plasma membrane. The complex acts as a regulator of phosphatidylinositol 4-phosphate (PtdIns(4)P) synthesis. In the complex, EFR3A probably acts as the membrane-anchoring component. Also involved in responsiveness to G-protein-coupled receptors; it is however unclear whether this role is direct or indirect. The polypeptide is Protein EFR3 homolog A (Homo sapiens (Human)).